A 296-amino-acid chain; its full sequence is m7GpppN-mRNA hydrolase NUDT17 (296 aa).

The 147-residue stretch at 90–236 (GRGVDVGVAV…DSGSPCGPLP (147 aa)) folds into the Nudix hydrolase domain. The short motif at 129-150 (GHVELGEQLLEAGLRELQEETG) is the Nudix box element. Mg(2+)-binding residues include glutamate 144 and glutamate 148.

It belongs to the Nudix hydrolase family. It depends on Mg(2+) as a cofactor. Mn(2+) serves as cofactor.

The catalysed reaction is a 5'-end (N(7)-methyl 5'-triphosphoguanosine)-ribonucleoside in mRNA + H2O = N(7)-methyl-GDP + a 5'-end phospho-ribonucleoside in mRNA + 2 H(+). Functionally, acts as a decapping enzyme capable of hydrolyzing monomethylated capped RNAs (in vitro). Hydrolyzes monomethylated capped RNA after alpha and beta phosphates to form N(7)-methyl-GDP. Shows low activity towards unmethylated capped RNA. This is m7GpppN-mRNA hydrolase NUDT17 (nudt17) from Xenopus laevis (African clawed frog).